Consider the following 157-residue polypeptide: MARSKKGKNLIYVLLGLVGLLAFFVLFVPTLTISASTPVWLENTITYATSFRDAFNVSGMVYMVILLGVLIAYLLLKYSKTRQNKDALKVVLAVVIAFAVYLLFTPALAAAFSDQVWLVDFSKLATDITSFIDTNNGFLTIIAGLGALTFFIVKKSK.

Its function is as follows. May be a DNA-binding protein involved in virion nucleoprotein condensation. This is an uncharacterized protein from Mycoplasma (Bacteriophage L2).